The following is a 504-amino-acid chain: Maturase K (504 aa).

Belongs to the intron maturase 2 family. MatK subfamily.

Its subcellular location is the plastid. The protein localises to the chloroplast. Its function is as follows. Usually encoded in the trnK tRNA gene intron. Probably assists in splicing its own and other chloroplast group II introns. The chain is Maturase K from Hamamelis virginiana (Witch-hazel).